A 400-amino-acid polypeptide reads, in one-letter code: Golgin-45 (400 aa).

A compositionally biased stretch (polar residues) spans 1–16 (MTTKNLETKVTVTSSP). The interval 1 to 58 (MTTKNLETKVTVTSSPIRGAGDGMETEEPPKSVEVTSGVQSRKHHSLQSPWKKAVPSE) is disordered. Serine 15 is subject to Phosphoserine. The Tankyrase-binding motif motif lies at 18 to 22 (RGAGD). Phosphoserine is present on serine 49. A coiled-coil region spans residues 120–213 (NKELSEVKNV…QLERMSIQCD (94 aa)). Threonine 348 bears the Phosphothreonine mark. Phosphoserine is present on serine 353. Residues 394–400 (RGELIAL) are essential for interaction with GORASP2.

In terms of assembly, interacts with GORASP2. Interacts with the GTP-bound form of RAB2, but not with other Golgi Rab proteins. Identified in a complex with RAB2 and GORASP2. ADP-ribosylated by tankyrase TNKS and TNKS2. Poly-ADP-ribosylated protein is recognized by RNF146, followed by ubiquitination. In terms of processing, ubiquitinated by RNF146 when poly-ADP-ribosylated, leading to its degradation. Detected in adrenal gland.

The protein localises to the golgi apparatus membrane. It localises to the nucleus. It is found in the cytoplasm. Functionally, required for normal Golgi structure and for protein transport from the endoplasmic reticulum (ER) through the Golgi apparatus to the cell surface. This chain is Golgin-45 (BLZF1), found in Homo sapiens (Human).